The following is a 255-amino-acid chain: Eukaryotic translation initiation factor 3 subunit J (255 aa).

2 stretches are compositionally biased toward acidic residues: residues 1–16 (MAENDSWDADDFEAED) and 34–53 (EGEDEEEDVKDNWDDEEEAQ). Residues 1-107 (MAENDSWDAD…SSNLPEITPE (107 aa)) are disordered. The segment covering 54 to 95 (DATKQEPQKTELKVPEKKKLQEKIKEKENLQKKRKEELKKQA) has biased composition (basic and acidic residues). Residues 69–131 (EKKKLQEKIK…DSDLELAKEA (63 aa)) adopt a coiled-coil conformation.

This sequence belongs to the eIF-3 subunit J family. As to quaternary structure, component of the eukaryotic translation initiation factor 3 (eIF-3) complex, which is composed of 13 subunits: eif3a, eif3b, eif3c, eif3d, eif3e, eif3f, eif3g, eif3h, eif3i, eif3j, eif3k, eif3l and eif3m.

It localises to the cytoplasm. Its function is as follows. Component of the eukaryotic translation initiation factor 3 (eIF-3) complex, which is involved in protein synthesis of a specialized repertoire of mRNAs and, together with other initiation factors, stimulates binding of mRNA and methionyl-tRNAi to the 40S ribosome. The eIF-3 complex specifically targets and initiates translation of a subset of mRNAs involved in cell proliferation. In Xenopus laevis (African clawed frog), this protein is Eukaryotic translation initiation factor 3 subunit J (eif3j).